The primary structure comprises 203 residues: Glycerol-3-phosphate acyltransferase (203 aa).

Residues 1-3 (MSA) are Periplasmic-facing. Residues 4-24 (IAPGMILFAYLCGSISSAILV) traverse the membrane as a helical segment. Residues 25–52 (CRIAGLPDPRESGSGNPGATNVLRIGGK) lie on the Cytoplasmic side of the membrane. A helical membrane pass occupies residues 53–73 (GAAVAVLIFDILKGMLPVWGA). Residues 74–80 (YALGVTP) lie on the Periplasmic side of the membrane. The helical transmembrane segment at 81–101 (FWLGLIAIAACLGHIWPVFFG) threads the bilayer. The Cytoplasmic portion of the chain corresponds to 102–111 (FKGGKGVATA). The chain crosses the membrane as a helical span at residues 112-132 (FGAIAPIGWDLTGVMAGTWLL). The Periplasmic segment spans residues 133-137 (TVLLS). Residues 138 to 158 (GYSSLGAIVSALIAPFYVWWF) traverse the membrane as a helical segment. The Cytoplasmic portion of the chain corresponds to 159 to 203 (KPQFTFPVSMLSCLILLRHHDNIQRLWRRQETKIWTKLKKKRQKD).

This sequence belongs to the PlsY family. Probably interacts with PlsX.

It localises to the cell inner membrane. It carries out the reaction sn-glycerol 3-phosphate + an acyl-CoA = a 1-acyl-sn-glycero-3-phosphate + CoA. It catalyses the reaction a fatty acyl-[ACP] + sn-glycerol 3-phosphate = a 1-acyl-sn-glycero-3-phosphate + holo-[ACP]. It functions in the pathway lipid metabolism; phospholipid metabolism. In terms of biological role, catalyzes the transfer of an acyl group from acyl-ACP to glycerol-3-phosphate (G3P) to form lysophosphatidic acid (LPA). This enzyme can also utilize acyl-CoA as fatty acyl donor, but not acyl-PO(4). The polypeptide is Glycerol-3-phosphate acyltransferase (Salmonella agona (strain SL483)).